Reading from the N-terminus, the 168-residue chain is Ribosome maturation factor RimP (168 aa).

This sequence belongs to the RimP family.

It is found in the cytoplasm. Functionally, required for maturation of 30S ribosomal subunits. The protein is Ribosome maturation factor RimP of Bordetella parapertussis (strain 12822 / ATCC BAA-587 / NCTC 13253).